A 133-amino-acid polypeptide reads, in one-letter code: Ribonuclease VapC10 (133 aa).

Residues 2–119 (ILVDSDVLIA…NVWHFPMFEQ (118 aa)) form the PINc domain. The Mg(2+) site is built by aspartate 5 and aspartate 92.

The protein belongs to the PINc/VapC protein family. Mg(2+) serves as cofactor.

Functionally, toxic component of a type II toxin-antitoxin (TA) system. An RNase. The cognate antitoxin is VapB10. In Mycobacterium tuberculosis (strain CDC 1551 / Oshkosh), this protein is Ribonuclease VapC10.